Consider the following 1060-residue polypeptide: Carbamoyl phosphate synthase large chain (1060 aa).

The segment at 1–401 (MPKRTDIRKI…SLLKACRSLE (401 aa)) is carboxyphosphate synthetic domain. Residues R129, R169, G175, G176, R208, I210, E215, G241, I242, H243, Q284, and E298 each contribute to the ATP site. The ATP-grasp 1 domain occupies 133-327 (KQLMEELNQP…IAKLAAKIAV (195 aa)). 3 residues coordinate Mg(2+): Q284, E298, and N300. Mn(2+)-binding residues include Q284, E298, and N300. Residues 402–546 (IGVDHIKIAD…YSTYAVENES (145 aa)) are oligomerization domain. The interval 547 to 929 (LISDKASILV…ALYKAFEAAY (383 aa)) is carbamoyl phosphate synthetic domain. In terms of domain architecture, ATP-grasp 2 spans 671–861 (EATLQALNIP…MAQVATKVIL (191 aa)). Residues R707, A746, L748, E752, G777, V778, H779, S780, Q820, and E832 each coordinate ATP. Residues Q820, E832, and N834 each coordinate Mg(2+). Mn(2+) is bound by residues Q820, E832, and N834. The MGS-like domain occupies 930–1060 (LHMPDYGNIV…SRAFTLKVLD (131 aa)). An allosteric domain region spans residues 930-1060 (LHMPDYGNIV…SRAFTLKVLD (131 aa)).

This sequence belongs to the CarB family. As to quaternary structure, composed of two chains; the small (or glutamine) chain promotes the hydrolysis of glutamine to ammonia, which is used by the large (or ammonia) chain to synthesize carbamoyl phosphate. Tetramer of heterodimers (alpha,beta)4. Mg(2+) serves as cofactor. The cofactor is Mn(2+).

The enzyme catalyses hydrogencarbonate + L-glutamine + 2 ATP + H2O = carbamoyl phosphate + L-glutamate + 2 ADP + phosphate + 2 H(+). The catalysed reaction is hydrogencarbonate + NH4(+) + 2 ATP = carbamoyl phosphate + 2 ADP + phosphate + 2 H(+). Its pathway is amino-acid biosynthesis; L-arginine biosynthesis; carbamoyl phosphate from bicarbonate: step 1/1. It functions in the pathway pyrimidine metabolism; UMP biosynthesis via de novo pathway; (S)-dihydroorotate from bicarbonate: step 1/3. Its function is as follows. Large subunit of the glutamine-dependent carbamoyl phosphate synthetase (CPSase). CPSase catalyzes the formation of carbamoyl phosphate from the ammonia moiety of glutamine, carbonate, and phosphate donated by ATP, constituting the first step of 2 biosynthetic pathways, one leading to arginine and/or urea and the other to pyrimidine nucleotides. The large subunit (synthetase) binds the substrates ammonia (free or transferred from glutamine from the small subunit), hydrogencarbonate and ATP and carries out an ATP-coupled ligase reaction, activating hydrogencarbonate by forming carboxy phosphate which reacts with ammonia to form carbamoyl phosphate. The sequence is that of Carbamoyl phosphate synthase large chain from Streptococcus agalactiae serotype III (strain NEM316).